The sequence spans 421 residues: UDP-N-acetylglucosamine 1-carboxyvinyltransferase (421 aa).

22-23 (KN) provides a ligand contact to phosphoenolpyruvate. Arg-92 serves as a coordination point for UDP-N-acetyl-alpha-D-glucosamine. Asp-116 acts as the Proton donor in catalysis. UDP-N-acetyl-alpha-D-glucosamine-binding positions include 121–125 (RPIDQ), Asp-307, and Ile-330.

This sequence belongs to the EPSP synthase family. MurA subfamily.

The protein resides in the cytoplasm. The enzyme catalyses phosphoenolpyruvate + UDP-N-acetyl-alpha-D-glucosamine = UDP-N-acetyl-3-O-(1-carboxyvinyl)-alpha-D-glucosamine + phosphate. It functions in the pathway cell wall biogenesis; peptidoglycan biosynthesis. Cell wall formation. Adds enolpyruvyl to UDP-N-acetylglucosamine. The chain is UDP-N-acetylglucosamine 1-carboxyvinyltransferase from Lactobacillus johnsonii (strain CNCM I-12250 / La1 / NCC 533).